A 282-amino-acid chain; its full sequence is Aspergillopepsin-2 (282 aa).

A signal peptide spans 1-18 (MKFSTILTGSLFATAALA). Propeptides lie at residues 19–59 (APLT…GTTN) and 99–109 (GGGYGYWKNKR). Over residues 27–39 (ARKEARAAGKRHS) the composition is skewed to basic residues. Residues 27-46 (ARKEARAAGKRHSNPPYIPG) are disordered. Gln110 is modified (pyrrolidone carboxylic acid). Disulfide bonds link Cys115/Cys139 and Cys127/Cys210.

The protein belongs to the peptidase G1 family. In terms of assembly, heterodimer of two noncovalently bound light and heavy chains.

The enzyme catalyses Preferential cleavage in B chain of insulin: 3-Asn-|-Gln-4, 13-Gly-|-Ala-14, and 26-Tyr-|-Thr-27.. This chain is Aspergillopepsin-2, found in Aspergillus niger.